Here is a 308-residue protein sequence, read N- to C-terminus: 1,4-dihydroxy-2-naphthoate octaprenyltransferase (308 aa).

The next 9 membrane-spanning stretches (helical) occupy residues 22-42 (TLPL…WANP), 47-67 (GLVM…SNFA), 101-121 (WGLI…IGIA), 129-149 (FAFA…TVGV), 153-173 (GYMG…GVGG), 186-206 (IILP…INNL), 235-255 (ILLS…AISW), 256-276 (TNYL…FVYC), and 286-306 (ILAQ…LGLL).

This sequence belongs to the MenA family. Type 1 subfamily.

The protein resides in the cell inner membrane. The enzyme catalyses an all-trans-polyprenyl diphosphate + 1,4-dihydroxy-2-naphthoate + H(+) = a 2-demethylmenaquinol + CO2 + diphosphate. It participates in quinol/quinone metabolism; menaquinone biosynthesis; menaquinol from 1,4-dihydroxy-2-naphthoate: step 1/2. Its function is as follows. Conversion of 1,4-dihydroxy-2-naphthoate (DHNA) to demethylmenaquinone (DMK). In Haemophilus influenzae (strain ATCC 51907 / DSM 11121 / KW20 / Rd), this protein is 1,4-dihydroxy-2-naphthoate octaprenyltransferase.